The chain runs to 545 residues: POTE ankyrin domain family member H (545 aa).

ANK repeat units lie at residues 180-208 (LHRA…KKDK), 209-238 (QKRT…QLNI), 242-271 (KKRT…DPNI), 275-304 (YGNT…DIES), 308-337 (HGLT…NLNA), 341-370 (YGRT…DVSS), and 374-404 (SGQT…QILK). Residues 406–524 (SSENSNPEQD…KQLSEEQNTG (119 aa)) form a disordered region. 2 stretches are compositionally biased toward basic and acidic residues: residues 414–429 (QDLK…RLKG) and 443–458 (EINK…EMKK). Over residues 513 to 524 (TQKQLSEEQNTG) the composition is skewed to polar residues.

The protein belongs to the POTE family.

The sequence is that of POTE ankyrin domain family member H (POTEH) from Homo sapiens (Human).